We begin with the raw amino-acid sequence, 214 residues long: rRNA N(6)-adenosine-methyltransferase metl-5 (214 aa).

Residues Gln-25, Thr-28, Gly-55, Cys-58, Asp-78, and 106-107 (DI) contribute to the S-adenosyl-L-methionine site.

It belongs to the methyltransferase superfamily. PrmA family. Heterodimer; heterodimerizes with TRMT112/C04H5.1.

The enzyme catalyses adenosine in rRNA + S-adenosyl-L-methionine = N(6)-methyladenosine in rRNA + S-adenosyl-L-homocysteine + H(+). Catalytic subunit of a heterodimer with TRMT112/C04H5.1, which specifically methylates the 6th position of adenine in position 1717 of 18S rRNA. The chain is rRNA N(6)-adenosine-methyltransferase metl-5 from Caenorhabditis elegans.